The following is a 573-amino-acid chain: Solute carrier family 41 member 2 (573 aa).

Residues 1–162 are Extracellular-facing; that stretch reads MTNCKGRSTI…KESSSIMALQ (162 aa). Residues 163-183 traverse the membrane as a helical segment; it reads ILVPFLLAGFGTVTAGMVLDI. Over 184–195 the chain is Cytoplasmic; sequence VQHWDVFKNVTE. The helical transmembrane segment at 196-216 threads the bilayer; it reads VFILVPALLGLKGNLEMTLAS. At 217 to 245 the chain is on the extracellular side; the sequence is RLSTAVNIGKMDSPIEKWNLIIGNLALKQ. Residues 246-266 traverse the membrane as a helical segment; it reads VQATVVGFLAAVAAVILGWIP. The Cytoplasmic segment spans residues 267–282; the sequence is EGKYSFSHSILLCSSS. A helical transmembrane segment spans residues 283–303; it reads VATAFIASLLQGIIMVGVIVG. Topologically, residues 304–313 are extracellular; that stretch reads SKKTGINPDN. Residues 314-334 traverse the membrane as a helical segment; the sequence is VATPIAASFGDLITLAILAWI. Residues 335-347 lie on the Cytoplasmic side of the membrane; it reads SQGLYTCLETYYY. A helical transmembrane segment spans residues 348–368; that stretch reads VSPLVGAFFLALTPMGIVIAA. Residues 369-376 lie on the Extracellular side of the membrane; sequence KHPATRTV. The helical transmembrane segment at 377–397 threads the bilayer; the sequence is LHSGWEPVITAMIISSIGGLI. The Cytoplasmic segment spans residues 398–406; the sequence is LDTTVSDPN. The helical transmembrane segment at 407-427 threads the bilayer; it reads LVGIVVYTPVINGIGGNLVAI. Topologically, residues 428–469 are extracellular; the sequence is QASRISTYLHLHSIPGELPEEAKGCYYPCRTYYGTGVNNKSA. Residues 470 to 490 form a helical membrane-spanning segment; sequence QVLLLLVIPGHLIFLYTIHLM. Topologically, residues 491-499 are cytoplasmic; the sequence is KSGHTSLTP. A helical membrane pass occupies residues 500–520; sequence IFIAVYLFAALLQVFTLLWIA. The Extracellular portion of the chain corresponds to 521–543; the sequence is DWMVHHFWKKGKDPDSFSIPYLT. Residues 544 to 564 form a helical membrane-spanning segment; sequence ALGDLLGTALLAVGFHFLWLI. Topologically, residues 565–573 are cytoplasmic; the sequence is GDRDGDVGD.

The protein belongs to the SLC41A transporter family.

It localises to the cell membrane. It catalyses the reaction Mg(2+)(in) = Mg(2+)(out). The catalysed reaction is Mn(2+)(in) = Mn(2+)(out). The enzyme catalyses Co(2+)(in) = Co(2+)(out). It carries out the reaction Ni(2+)(in) = Ni(2+)(out). It catalyses the reaction Fe(2+)(in) = Fe(2+)(out). Acts as a plasma-membrane magnesium transporter. Can also mediate the transport of other divalent metal cations in an order of Ba(2+) &gt; Ni(2+) &gt; Co(2+) &gt; Fe(2+) &gt; Mn(2+). The protein is Solute carrier family 41 member 2 (SLC41A2) of Gallus gallus (Chicken).